A 424-amino-acid chain; its full sequence is Protein CLP1 homolog (424 aa).

Residues Glu19, Lys60, and 122 to 127 each bind ATP; that span reads DVGKST.

This sequence belongs to the Clp1 family. Clp1 subfamily.

The protein localises to the nucleus. Required for endonucleolytic cleavage during polyadenylation-dependent pre-mRNA 3'-end formation. In Aedes aegypti (Yellowfever mosquito), this protein is Protein CLP1 homolog (cbc).